The primary structure comprises 635 residues: Threonine--tRNA ligase (635 aa).

Residues 1–58 (MIQVTCDQKNYEVLEGTTAAELAKQLKNSHQFIGVLINERPRDLSTHLNEGDTLVFLT) form the TGS domain. Residues 237-528 (DHRVLGAKLD…LIENFKGRFP (292 aa)) are catalytic. Cys-328, His-379, and His-505 together coordinate Zn(2+).

Belongs to the class-II aminoacyl-tRNA synthetase family. In terms of assembly, homodimer. It depends on Zn(2+) as a cofactor.

It localises to the cytoplasm. It catalyses the reaction tRNA(Thr) + L-threonine + ATP = L-threonyl-tRNA(Thr) + AMP + diphosphate + H(+). In terms of biological role, catalyzes the attachment of threonine to tRNA(Thr) in a two-step reaction: L-threonine is first activated by ATP to form Thr-AMP and then transferred to the acceptor end of tRNA(Thr). Also edits incorrectly charged L-seryl-tRNA(Thr). This chain is Threonine--tRNA ligase, found in Chlamydia pneumoniae (Chlamydophila pneumoniae).